Here is a 149-residue protein sequence, read N- to C-terminus: UPF0208 membrane protein VSAL_I2111 (149 aa).

The next 2 membrane-spanning stretches (helical) occupy residues 41 to 61 and 69 to 89; these read FAVK…MVFN and SIII…WLGN.

This sequence belongs to the UPF0208 family.

Its subcellular location is the cell inner membrane. This chain is UPF0208 membrane protein VSAL_I2111, found in Aliivibrio salmonicida (strain LFI1238) (Vibrio salmonicida (strain LFI1238)).